Consider the following 250-residue polypeptide: Triosephosphate isomerase (250 aa).

N9–K11 provides a ligand contact to substrate. The Electrophile role is filled by H95. E167 functions as the Proton acceptor in the catalytic mechanism. Residues G173, S213, and G234–G235 each bind substrate.

Belongs to the triosephosphate isomerase family. As to quaternary structure, homodimer.

The protein localises to the cytoplasm. The catalysed reaction is D-glyceraldehyde 3-phosphate = dihydroxyacetone phosphate. Its pathway is carbohydrate biosynthesis; gluconeogenesis. It participates in carbohydrate degradation; glycolysis; D-glyceraldehyde 3-phosphate from glycerone phosphate: step 1/1. Functionally, involved in the gluconeogenesis. Catalyzes stereospecifically the conversion of dihydroxyacetone phosphate (DHAP) to D-glyceraldehyde-3-phosphate (G3P). The chain is Triosephosphate isomerase from Herpetosiphon aurantiacus (strain ATCC 23779 / DSM 785 / 114-95).